Here is a 196-residue protein sequence, read N- to C-terminus: dTTP/UTP pyrophosphatase (196 aa).

Aspartate 75 acts as the Proton acceptor in catalysis.

It belongs to the Maf family. YhdE subfamily. The cofactor is a divalent metal cation.

The protein localises to the cytoplasm. The catalysed reaction is dTTP + H2O = dTMP + diphosphate + H(+). It carries out the reaction UTP + H2O = UMP + diphosphate + H(+). In terms of biological role, nucleoside triphosphate pyrophosphatase that hydrolyzes dTTP and UTP. May have a dual role in cell division arrest and in preventing the incorporation of modified nucleotides into cellular nucleic acids. The sequence is that of dTTP/UTP pyrophosphatase from Wolbachia pipientis subsp. Culex pipiens (strain wPip).